The following is a 488-amino-acid chain: Bifunctional protein HldE (488 aa).

Positions 1–327 (MDDTLAKLPR…GLAHGEHADP (327 aa)) are ribokinase. An ATP-binding site is contributed by 201 to 204 (NRRE). The active site involves Asp-272. A cytidylyltransferase region spans residues 354 to 488 (FTNGCFDLLH…GRMNAPAVGG (135 aa)).

In the N-terminal section; belongs to the carbohydrate kinase PfkB family. It in the C-terminal section; belongs to the cytidylyltransferase family. Homodimer.

It carries out the reaction D-glycero-beta-D-manno-heptose 7-phosphate + ATP = D-glycero-beta-D-manno-heptose 1,7-bisphosphate + ADP + H(+). It catalyses the reaction D-glycero-beta-D-manno-heptose 1-phosphate + ATP + H(+) = ADP-D-glycero-beta-D-manno-heptose + diphosphate. It participates in nucleotide-sugar biosynthesis; ADP-L-glycero-beta-D-manno-heptose biosynthesis; ADP-L-glycero-beta-D-manno-heptose from D-glycero-beta-D-manno-heptose 7-phosphate: step 1/4. Its pathway is nucleotide-sugar biosynthesis; ADP-L-glycero-beta-D-manno-heptose biosynthesis; ADP-L-glycero-beta-D-manno-heptose from D-glycero-beta-D-manno-heptose 7-phosphate: step 3/4. Catalyzes the phosphorylation of D-glycero-D-manno-heptose 7-phosphate at the C-1 position to selectively form D-glycero-beta-D-manno-heptose-1,7-bisphosphate. Its function is as follows. Catalyzes the ADP transfer from ATP to D-glycero-beta-D-manno-heptose 1-phosphate, yielding ADP-D-glycero-beta-D-manno-heptose. This is Bifunctional protein HldE from Caulobacter sp. (strain K31).